A 1060-amino-acid chain; its full sequence is Anoctamin-8 (1060 aa).

The segment at 1 to 32 is disordered; sequence MAEAASGAGDVTLEGERGKRPPPEGEPAAPAS. Ala2 carries the N-acetylalanine modification. Over 2 to 244 the chain is Cytoplasmic; that stretch reads AEAASGAGDV…DDICDYFGVK (243 aa). Positions 14–23 are enriched in basic and acidic residues; it reads EGERGKRPPP. Residues 245-265 traverse the membrane as a helical segment; the sequence is IAMYFAWLGFYTSAMVYPAVF. Residues 266-281 lie on the Extracellular side of the membrane; that stretch reads GSVLYTFTEADQTSRD. The chain crosses the membrane as a helical span at residues 282–302; sequence VSCVVFALFNVIWSTLFLEEW. Topologically, residues 303–356 are cytoplasmic; it reads KRRGAELAYKWGTLDSPGEAVEEPRPQFRGIRRISPITRAEEFYYPPWKRLLFQ. Ser318 is modified (phosphoserine). Residues 357–377 form a helical membrane-spanning segment; sequence LLVSLPLCLACLICVFILMLG. The Extracellular portion of the chain corresponds to 378-400; the sequence is CFQLQELVLSVKGLPRLVRFLPK. Residues 401 to 421 traverse the membrane as a helical segment; that stretch reads VMLALLVSVSAEGYKKLAVWL. Over 422 to 437 the chain is Cytoplasmic; that stretch reads NDMENYRLESTYERHL. Residues 438–458 traverse the membrane as a helical segment; the sequence is IIKVVLFQFVNSYLSLFYIGF. Residues 459–745 are Extracellular-facing; it reads YLKDMDRLKE…YEDTFQDYQE (287 aa). Disordered regions lie at residues 529 to 605, 619 to 640, 653 to 672, and 680 to 723; these read AQAD…SLLD, GAGR…SPTM, AEED…EPQT, and GEGR…HSPQ. Residues 534 to 547 are compositionally biased toward gly residues; the sequence is GGAGSRRCLGGGCG. Composition is skewed to acidic residues over residues 549 to 559 and 581 to 602; these read PEEENEEEEEA and EEDE…EEGS. Ser665 carries the post-translational modification Phosphoserine. Over residues 680 to 694 the composition is skewed to basic and acidic residues; sequence GEGRDQGPDGDRDTE. N-linked (GlcNAc...) asparagine glycosylation is present at Asn708. The helical transmembrane segment at 746 to 766 threads the bilayer; the sequence is MFVQFGYVVLFSSAFPLAALC. At 767–802 the chain is on the cytoplasmic side; it reads ALVNNLIEIRSDAFKLCTGLQRPFGRRVESIGQWQK. A Phosphoserine modification is found at Ser796. A helical transmembrane segment spans residues 803–823; it reads VMEAMGVLAIVVNCYLIGQCG. The Extracellular portion of the chain corresponds to 824-836; the sequence is QLQRLFPWLSPEA. A helical transmembrane segment spans residues 837-857; the sequence is AIVSVVVLEHLALLVKYLIHV. At 858-1060 the chain is on the cytoplasmic side; that stretch reads AIPDIPGWVA…PRPEDAGHRP (203 aa). The tract at residues 884-1060 is disordered; the sequence is HERQAQQRFQ…PRPEDAGHRP (177 aa). 2 stretches are compositionally biased toward basic and acidic residues: residues 899–927 and 935–950; these read RREE…EARA and VAER…ERPR. Pro residues predominate over residues 972 to 986; it reads TRPPAPTGCAPPPRS. At Arg991 the chain carries Asymmetric dimethylarginine; alternate. The residue at position 991 (Arg991) is an Omega-N-methylarginine; alternate. Arg999 is subject to Omega-N-methylarginine. Over residues 1049-1060 the composition is skewed to basic and acidic residues; the sequence is PEPRPEDAGHRP.

The protein belongs to the anoctamin family. In terms of tissue distribution, predominant expression seen in epithelial tissues.

The protein localises to the cell membrane. Functionally, does not exhibit calcium-activated chloride channel (CaCC) activity. This Mus musculus (Mouse) protein is Anoctamin-8 (Ano8).